The primary structure comprises 316 residues: Ribosomal RNA small subunit methyltransferase H (316 aa).

S-adenosyl-L-methionine is bound by residues 35–37 (GGH), Asp55, Phe79, Asp101, and Gln108.

Belongs to the methyltransferase superfamily. RsmH family.

Its subcellular location is the cytoplasm. It carries out the reaction cytidine(1402) in 16S rRNA + S-adenosyl-L-methionine = N(4)-methylcytidine(1402) in 16S rRNA + S-adenosyl-L-homocysteine + H(+). Specifically methylates the N4 position of cytidine in position 1402 (C1402) of 16S rRNA. The chain is Ribosomal RNA small subunit methyltransferase H from Aliivibrio fischeri (strain ATCC 700601 / ES114) (Vibrio fischeri).